The chain runs to 497 residues: Glycerol kinase (497 aa).

Residue Thr11 participates in ADP binding. Residues Thr11, Thr12, and Ser13 each coordinate ATP. Thr11 contributes to the sn-glycerol 3-phosphate binding site. Arg15 lines the ADP pocket. Residues Arg81, Glu82, Tyr134, and Asp244 each coordinate sn-glycerol 3-phosphate. Residues Arg81, Glu82, Tyr134, Asp244, and Gln245 each coordinate glycerol. ADP is bound by residues Thr266 and Gly309. 4 residues coordinate ATP: Thr266, Gly309, Gln313, and Gly410. Residues Gly410 and Asn414 each contribute to the ADP site.

It belongs to the FGGY kinase family.

The enzyme catalyses glycerol + ATP = sn-glycerol 3-phosphate + ADP + H(+). The protein operates within polyol metabolism; glycerol degradation via glycerol kinase pathway; sn-glycerol 3-phosphate from glycerol: step 1/1. With respect to regulation, inhibited by fructose 1,6-bisphosphate (FBP). Its function is as follows. Key enzyme in the regulation of glycerol uptake and metabolism. Catalyzes the phosphorylation of glycerol to yield sn-glycerol 3-phosphate. This is Glycerol kinase from Fusobacterium nucleatum subsp. nucleatum (strain ATCC 25586 / DSM 15643 / BCRC 10681 / CIP 101130 / JCM 8532 / KCTC 2640 / LMG 13131 / VPI 4355).